A 91-amino-acid chain; its full sequence is Acylphosphatase (91 aa).

The Acylphosphatase-like domain occupies 4–91 (RYLIKVLGRV…DNEKSFKIVY (88 aa)). Active-site residues include R19 and N37.

Belongs to the acylphosphatase family.

It catalyses the reaction an acyl phosphate + H2O = a carboxylate + phosphate + H(+). This is Acylphosphatase (acyP) from Clostridium acetobutylicum (strain ATCC 824 / DSM 792 / JCM 1419 / IAM 19013 / LMG 5710 / NBRC 13948 / NRRL B-527 / VKM B-1787 / 2291 / W).